Here is a 520-residue protein sequence, read N- to C-terminus: Cholesterol side-chain cleavage enzyme, mitochondrial (520 aa).

Residues 1-39 (MLVRGLPLRSVLVKGCQPLLSAPREGPGHPRVPTGEGAG) constitute a mitochondrion transit peptide. The disordered stretch occupies residues 19–47 (LLSAPREGPGHPRVPTGEGAGMSSHSPRP). Position 461 (Cys-461) interacts with heme.

The protein belongs to the cytochrome P450 family. Interacts with FDX1/adrenodoxin. Requires heme as cofactor.

It is found in the mitochondrion inner membrane. It catalyses the reaction 6 reduced [adrenodoxin] + cholesterol + 3 O2 + 6 H(+) = 4-methylpentanal + pregnenolone + 6 oxidized [adrenodoxin] + 4 H2O. The enzyme catalyses 2 reduced [adrenodoxin] + cholesterol + O2 + 2 H(+) = (22R)-hydroxycholesterol + 2 oxidized [adrenodoxin] + H2O. The catalysed reaction is (22R)-hydroxycholesterol + 2 reduced [adrenodoxin] + O2 + 2 H(+) = (20R,22R)-20,22-dihydroxycholesterol + 2 oxidized [adrenodoxin] + H2O. It carries out the reaction (20R,22R)-20,22-dihydroxycholesterol + 2 reduced [adrenodoxin] + O2 + 2 H(+) = 4-methylpentanal + pregnenolone + 2 oxidized [adrenodoxin] + 2 H2O. The protein operates within lipid metabolism; C21-steroid hormone metabolism. It participates in steroid metabolism; cholesterol metabolism. In terms of biological role, a cytochrome P450 monooxygenase that catalyzes the side-chain hydroxylation and cleavage of cholesterol to pregnenolone, the precursor of most steroid hormones. Catalyzes three sequential oxidation reactions of cholesterol, namely the hydroxylation at C22 followed with the hydroxylation at C20 to yield 20R,22R-hydroxycholesterol that is further cleaved between C20 and C22 to yield the C21-steroid pregnenolone and 4-methylpentanal. Mechanistically, uses molecular oxygen inserting one oxygen atom into a substrate and reducing the second into a water molecule. Two electrons are provided by NADPH via a two-protein mitochondrial transfer system comprising flavoprotein FDXR (adrenodoxin/ferredoxin reductase) and nonheme iron-sulfur protein FDX1 or FDX2 (adrenodoxin/ferredoxin). This chain is Cholesterol side-chain cleavage enzyme, mitochondrial (CYP11A1), found in Equus caballus (Horse).